The chain runs to 140 residues: L-fucose mutarotase (140 aa).

His-22 functions as the Proton donor in the catalytic mechanism. Residues Asp-30, Arg-107, and 129-131 each bind substrate; that span reads YGN.

It belongs to the RbsD / FucU family. FucU mutarotase subfamily. Homodecamer.

Its subcellular location is the cytoplasm. The catalysed reaction is alpha-L-fucose = beta-L-fucose. The protein operates within carbohydrate metabolism; L-fucose metabolism. Involved in the anomeric conversion of L-fucose. In Klebsiella pneumoniae (strain 342), this protein is L-fucose mutarotase.